Consider the following 262-residue polypeptide: tRNA (guanine-N(7)-)-methyltransferase (262 aa).

The tract at residues 1 to 58 (MLPQDTNTDPLPGDDAESASGKSADASQGTPNPGDEVAHPRRIRSFVRRAGRTSTGQQ) is disordered. A compositionally biased stretch (basic residues) spans 40 to 51 (PRRIRSFVRRAG). S-adenosyl-L-methionine is bound by residues Glu-92, Glu-117, Asp-144, and Asp-167. Residue Asp-167 is part of the active site. Lys-171 contributes to the substrate binding site. Residues 173 to 178 (RHNKRR) are interaction with RNA. Substrate-binding positions include Asp-203 and 241 to 244 (TKFE).

Belongs to the class I-like SAM-binding methyltransferase superfamily. TrmB family.

It catalyses the reaction guanosine(46) in tRNA + S-adenosyl-L-methionine = N(7)-methylguanosine(46) in tRNA + S-adenosyl-L-homocysteine. Its pathway is tRNA modification; N(7)-methylguanine-tRNA biosynthesis. Functionally, catalyzes the formation of N(7)-methylguanine at position 46 (m7G46) in tRNA. In Cupriavidus metallidurans (strain ATCC 43123 / DSM 2839 / NBRC 102507 / CH34) (Ralstonia metallidurans), this protein is tRNA (guanine-N(7)-)-methyltransferase.